A 62-amino-acid chain; its full sequence is UPF0337 protein gsr0040 (62 aa).

Composition is skewed to basic and acidic residues over residues 1–15 and 27–62; these read MGID…KDVQ and DDPK…IDNV. A disordered region spans residues 1 to 62; it reads MGIDKRAEAT…DQAHRTIDNV (62 aa).

It belongs to the UPF0337 (CsbD) family.

The sequence is that of UPF0337 protein gsr0040 from Gloeobacter violaceus (strain ATCC 29082 / PCC 7421).